A 478-amino-acid chain; its full sequence is Argininosuccinate synthase (478 aa).

Residues 17–25 (AFSGGLDTS) and alanine 43 contribute to the ATP site. Tyrosine 99 lines the L-citrulline pocket. Residues glycine 129 and threonine 131 each contribute to the ATP site. Threonine 131, asparagine 135, and aspartate 136 together coordinate L-aspartate. Residue asparagine 135 participates in L-citrulline binding. Residue aspartate 136 coordinates ATP. The L-citrulline site is built by arginine 139 and serine 192. An ATP-binding site is contributed by aspartate 194. L-citrulline is bound by residues threonine 201, glutamate 203, and glutamate 280.

It belongs to the argininosuccinate synthase family. Type 2 subfamily. In terms of assembly, homotetramer.

It is found in the cytoplasm. The catalysed reaction is L-citrulline + L-aspartate + ATP = 2-(N(omega)-L-arginino)succinate + AMP + diphosphate + H(+). It functions in the pathway amino-acid biosynthesis; L-arginine biosynthesis; L-arginine from L-ornithine and carbamoyl phosphate: step 2/3. The chain is Argininosuccinate synthase from Leifsonia xyli subsp. xyli (strain CTCB07).